The sequence spans 409 residues: S-adenosylmethionine synthase (409 aa).

Position 15 (H15) interacts with ATP. D17 provides a ligand contact to Mg(2+). Position 43 (E43) interacts with K(+). 2 residues coordinate L-methionine: E56 and Q100. The tract at residues 100-110 (QSSDIAQGVNE) is flexible loop. ATP-binding positions include 171 to 173 (DGK), 248 to 249 (KF), D257, 263 to 264 (RK), A280, and K284. D257 is an L-methionine binding site. Residue K288 participates in L-methionine binding.

This sequence belongs to the AdoMet synthase family. In terms of assembly, homotetramer; dimer of dimers. The cofactor is Mg(2+). K(+) serves as cofactor.

Its subcellular location is the cytoplasm. It catalyses the reaction L-methionine + ATP + H2O = S-adenosyl-L-methionine + phosphate + diphosphate. It functions in the pathway amino-acid biosynthesis; S-adenosyl-L-methionine biosynthesis; S-adenosyl-L-methionine from L-methionine: step 1/1. In terms of biological role, catalyzes the formation of S-adenosylmethionine (AdoMet) from methionine and ATP. The overall synthetic reaction is composed of two sequential steps, AdoMet formation and the subsequent tripolyphosphate hydrolysis which occurs prior to release of AdoMet from the enzyme. This chain is S-adenosylmethionine synthase, found in Prochlorococcus marinus (strain NATL2A).